The primary structure comprises 1034 residues: Multidrug export protein AcrF (1034 aa).

Residues Met1 to Pro9 lie on the Cytoplasmic side of the membrane. The helical transmembrane segment at Ile10–Leu28 threads the bilayer. The Periplasmic segment spans residues Gln29–Glu339. Residues Val340 to Leu359 traverse the membrane as a helical segment. Residues Gln360–Thr365 lie on the Cytoplasmic side of the membrane. Residues Leu366–Ala385 form a helical membrane-spanning segment. The Periplasmic portion of the chain corresponds to Phe386–Asn391. A helical transmembrane segment spans residues Thr392 to Val413. Over Glu414–Ala441 the chain is Cytoplasmic. The chain crosses the membrane as a helical span at residues Leu442–Gly460. Topologically, residues Gly461–Thr473 are periplasmic. A helical transmembrane segment spans residues Ile474–Leu496. The Cytoplasmic segment spans residues Leu497–Thr537. A helical transmembrane segment spans residues Gly538–Leu556. The Periplasmic portion of the chain corresponds to Arg557–Gln871. The chain crosses the membrane as a helical span at residues Ala872 to Tyr891. Over Glu892–Pro897 the chain is Cytoplasmic. The chain crosses the membrane as a helical span at residues Val898–Leu917. Over Phe918–Asp923 the chain is Periplasmic. Residues Val924–Val945 form a helical membrane-spanning segment. The Cytoplasmic portion of the chain corresponds to Glu946–Pro973. A helical transmembrane segment spans residues Ile974–Asn992. Over Gly993–Gly1005 the chain is Periplasmic. The chain crosses the membrane as a helical span at residues Val1006–Ile1028. Residues Arg1029–Gly1034 lie on the Cytoplasmic side of the membrane.

This sequence belongs to the resistance-nodulation-cell division (RND) (TC 2.A.6) family. In terms of assembly, part of the tripartite efflux system AcrEF-TolC, which is composed of an inner membrane transporter, AcrF, a periplasmic membrane fusion protein, AcrE, and an outer membrane component, TolC. The complex forms a large protein conduit and can translocate molecules across both the inner and outer membranes.

The protein resides in the cell inner membrane. In terms of biological role, part of the tripartite efflux system AcrEF-TolC. Involved in the efflux of indole and organic solvents. This chain is Multidrug export protein AcrF (acrF), found in Escherichia coli (strain K12).